The primary structure comprises 197 residues: dITP/XTP pyrophosphatase (197 aa).

8–13 (TGNQGK) contributes to the substrate binding site. The Proton acceptor role is filled by aspartate 69. Aspartate 69 lines the Mg(2+) pocket. Residues serine 70, 154–157 (FGYD), lysine 177, and 182–183 (HR) each bind substrate.

Belongs to the HAM1 NTPase family. As to quaternary structure, homodimer. It depends on Mg(2+) as a cofactor.

It catalyses the reaction XTP + H2O = XMP + diphosphate + H(+). The catalysed reaction is dITP + H2O = dIMP + diphosphate + H(+). The enzyme catalyses ITP + H2O = IMP + diphosphate + H(+). Its function is as follows. Pyrophosphatase that catalyzes the hydrolysis of nucleoside triphosphates to their monophosphate derivatives, with a high preference for the non-canonical purine nucleotides XTP (xanthosine triphosphate), dITP (deoxyinosine triphosphate) and ITP. Seems to function as a house-cleaning enzyme that removes non-canonical purine nucleotides from the nucleotide pool, thus preventing their incorporation into DNA/RNA and avoiding chromosomal lesions. In Photobacterium profundum (strain SS9), this protein is dITP/XTP pyrophosphatase.